A 967-amino-acid chain; its full sequence is Aminopeptidase N (967 aa).

The Cytoplasmic portion of the chain corresponds to 2 to 8 (AKGFYIS). A helical; Signal-anchor for type II membrane protein membrane pass occupies residues 9-32 (KSLGILGILLGVAAVCTIIALSVV). The cytosolic Ser/Thr-rich junction stretch occupies residues 33–68 (YSQEKNKNANSSPVASTTPSASATTNPASATTLDQS). Over 33–967 (YSQEKNKNAN…VLQWFTENSK (935 aa)) the chain is Extracellular. The disordered stretch occupies residues 40–62 (NANSSPVASTTPSASATTNPASA). The span at 41 to 62 (ANSSPVASTTPSASATTNPASA) shows a compositional bias: low complexity. Residues 69-967 (KAWNRYRLPN…VLQWFTENSK (899 aa)) are metalloprotease. N128 is a glycosylation site (N-linked (GlcNAc...) asparagine). Y176 carries the post-translational modification Sulfotyrosine. Residues N234 and N265 are each glycosylated (N-linked (GlcNAc...) asparagine). A necessary and sufficient to mediate interaction with HCoV-229E region spans residues 288–295 (DYVEKQAS). An N-linked (GlcNAc...) asparagine glycan is attached at N319. 352–356 (GAMEN) is a binding site for substrate. H388 lines the Zn(2+) pocket. The active-site Proton acceptor is E389. H392 and E411 together coordinate Zn(2+). Sulfotyrosine is present on residues Y419 and Y424. N-linked (GlcNAc...) asparagine glycosylation is found at N527, N573, N625, N681, and N735. 2 disulfide bridges follow: C761–C768 and C798–C834. An N-linked (GlcNAc...) asparagine glycan is attached at N818. A Sulfotyrosine modification is found at Y913.

The protein belongs to the peptidase M1 family. In terms of assembly, homodimer. Interacts with SLC6A19. As to quaternary structure, (Microbial infection) Interacts with the S1 domain of human coronavirus 229E/HCoV-229E spike protein. Requires Zn(2+) as cofactor. Sulfated. Post-translationally, N- and O-glycosylated. In terms of processing, may undergo proteolysis and give rise to a soluble form. Expressed in epithelial cells of the kidney, intestine, and respiratory tract; granulocytes, monocytes, fibroblasts, endothelial cells, cerebral pericytes at the blood-brain barrier, synaptic membranes of cells in the CNS. Also expressed in endometrial stromal cells, but not in the endometrial glandular cells. Found in the vasculature of tissues that undergo angiogenesis and in malignant gliomas and lymph node metastases from multiple tumor types but not in blood vessels of normal tissues. A soluble form has been found in plasma. It is found to be elevated in plasma and effusions of cancer patients.

It localises to the cell membrane. It catalyses the reaction Release of an N-terminal amino acid, Xaa-|-Yaa- from a peptide, amide or arylamide. Xaa is preferably Ala, but may be most amino acids including Pro (slow action). When a terminal hydrophobic residue is followed by a prolyl residue, the two may be released as an intact Xaa-Pro dipeptide.. Functionally, broad specificity aminopeptidase which plays a role in the final digestion of peptides generated from hydrolysis of proteins by gastric and pancreatic proteases. Also involved in the processing of various peptides including peptide hormones, such as angiotensin III and IV, neuropeptides, and chemokines. May also be involved the cleavage of peptides bound to major histocompatibility complex class II molecules of antigen presenting cells. May have a role in angiogenesis and promote cholesterol crystallization. May have a role in amino acid transport by acting as binding partner of amino acid transporter SLC6A19 and regulating its activity. (Microbial infection) Acts as a receptor for human coronavirus 229E/HCoV-229E. In case of human coronavirus 229E (HCoV-229E) infection, serves as receptor for HCoV-229E spike glycoprotein. Its function is as follows. (Microbial infection) Mediates as well Human cytomegalovirus (HCMV) infection. This is Aminopeptidase N (ANPEP) from Homo sapiens (Human).